The primary structure comprises 130 residues: Early E3B 14.5 kDa protein (130 aa).

Positions 1 to 19 (MKRIVTFVLLIFCALPVLC) are cleaved as a signal peptide. Residues 53–77 (AWLYAIISVMVFCSTIFALAIYPYL) traverse the membrane as a helical segment.

Belongs to the adenoviridae E3_14 family. In terms of processing, phosphorylated on serine; O-glycosylated, but not N-glycosylated.

It localises to the host membrane. Functionally, down-regulates the EGF receptor and prevents cytolysis by TNF. In Human adenovirus C serotype 6 (HAdV-6), this protein is Early E3B 14.5 kDa protein.